The chain runs to 598 residues: Ecto-NOX disulfide-thiol exchanger 2 (598 aa).

The region spanning 99–178 (KTVFVGGLPE…GRLHVDFAQA (80 aa)) is the RRM domain. Coiled-coil stretches lie at residues 264 to 299 (IQSANSHVRRLVNEKATHEKEMEEAKEKFKQALSGI) and 352 to 476 (RREE…KQEN).

It belongs to the ENOX family. Cu cation serves as cofactor. Post-translationally, glycosylated.

It localises to the cell membrane. The protein localises to the secreted. The protein resides in the extracellular space. Inhibited by the antitumor sulfonylurea LY181984, the vabilloid capsaicin, and retinoids. May be involved in cell growth. Probably acts as a terminal oxidase of plasma electron transport from cytosolic NAD(P)H via hydroquinones to acceptors at the cell surface. Hydroquinone oxidase activity alternates with a protein disulfide-thiol interchange/oxidoreductase activity which may control physical membrane displacements associated with vesicle budding or cell enlargement. The activities oscillate with a period length of 22 minutes and play a role in control of the ultradian cellular biological clock. This is Ecto-NOX disulfide-thiol exchanger 2 (Enox2) from Mus musculus (Mouse).